The sequence spans 133 residues: Large ribosomal subunit protein uL22 (133 aa).

The protein belongs to the universal ribosomal protein uL22 family. In terms of assembly, part of the 50S ribosomal subunit.

Its function is as follows. This protein binds specifically to 23S rRNA; its binding is stimulated by other ribosomal proteins, e.g. L4, L17, and L20. It is important during the early stages of 50S assembly. It makes multiple contacts with different domains of the 23S rRNA in the assembled 50S subunit and ribosome. In terms of biological role, the globular domain of the protein is located near the polypeptide exit tunnel on the outside of the subunit, while an extended beta-hairpin is found that lines the wall of the exit tunnel in the center of the 70S ribosome. The polypeptide is Large ribosomal subunit protein uL22 (Nocardia farcinica (strain IFM 10152)).